The chain runs to 98 residues: NADH-ubiquinone oxidoreductase chain 4L (98 aa).

Transmembrane regions (helical) follow at residues 1–21 (MPFI…GLLI), 29–49 (SLLC…TMTL), and 61–81 (IILL…LILI).

The protein belongs to the complex I subunit 4L family. In terms of assembly, core subunit of respiratory chain NADH dehydrogenase (Complex I) which is composed of 45 different subunits.

The protein localises to the mitochondrion inner membrane. The catalysed reaction is a ubiquinone + NADH + 5 H(+)(in) = a ubiquinol + NAD(+) + 4 H(+)(out). Its function is as follows. Core subunit of the mitochondrial membrane respiratory chain NADH dehydrogenase (Complex I) which catalyzes electron transfer from NADH through the respiratory chain, using ubiquinone as an electron acceptor. Part of the enzyme membrane arm which is embedded in the lipid bilayer and involved in proton translocation. The polypeptide is NADH-ubiquinone oxidoreductase chain 4L (MT-ND4L) (Cebus albifrons (White-fronted capuchin)).